The sequence spans 213 residues: Redox-sensing transcriptional repressor Rex (213 aa).

The H-T-H motif DNA-binding region spans Leu-17 to Phe-56. Position 91–96 (Gly-91–Gly-96) interacts with NAD(+).

This sequence belongs to the transcriptional regulatory Rex family. Homodimer.

It localises to the cytoplasm. Its function is as follows. Modulates transcription in response to changes in cellular NADH/NAD(+) redox state. The polypeptide is Redox-sensing transcriptional repressor Rex (Streptococcus mutans serotype c (strain ATCC 700610 / UA159)).